The sequence spans 356 residues: Fructose import permease protein FruF (356 aa).

The next 7 helical transmembrane spans lie at 25–45, 77–97, 113–133, 180–200, 231–251, 268–290, and 308–328; these read IVAFILLVIICTIFQHDFLAL, LVISTAGIDLSVGSVMAVAGA, ILIALAVGLAIGCVNGALVSF, FILGIPANFVIAVIIVILVGL, ILFLVYAISGFLAAIAGLFAT, MYAILAVVIGGTSLLGGKFSLAG, and LGVNAEATPAFFAVVVIVICV.

The protein belongs to the binding-protein-dependent transport system permease family. The complex is composed of an ATP-binding protein (FruK), two transmembrane proteins (FruF and FruG) and a solute-binding protein (FruE).

The protein localises to the cell membrane. Part of the high-affinity ABC transporter complex FruEKFG involved in fructose uptake. Can also transport ribose and xylose, with lower affinity. Probably responsible for the translocation of the substrate across the membrane. In Bifidobacterium longum (strain NCC 2705), this protein is Fructose import permease protein FruF.